The primary structure comprises 175 residues: Small ribosomal subunit protein mS38 (175 aa).

Belongs to the mitochondrion-specific ribosomal protein mS38 family. In terms of assembly, component of the mitochondrial small ribosomal subunit (mt-SSU). Mature yeast 74S mitochondrial ribosomes consist of a small (37S) and a large (54S) subunit. The 37S small subunit contains a 15S ribosomal RNA (15S mt-rRNA) and at least 32 different proteins. The 54S large subunit contains a 21S rRNA (21S mt-rRNA) and at least 45 different proteins.

It localises to the mitochondrion. It is found in the mitochondrion inner membrane. Component of the mitochondrial ribosome (mitoribosome), a dedicated translation machinery responsible for the synthesis of mitochondrial genome-encoded proteins, including at least some of the essential transmembrane subunits of the mitochondrial respiratory chain. The mitoribosomes are attached to the mitochondrial inner membrane and translation products are cotranslationally integrated into the membrane. mS38 is also involved in the splicing of the COX1 mRNA. This chain is Small ribosomal subunit protein mS38 (cox24), found in Schizosaccharomyces pombe (strain 972 / ATCC 24843) (Fission yeast).